The sequence spans 1281 residues: Dynactin subunit 1 (1281 aa).

The tract at residues 1 to 25 (MAQSKRHVYSRTPSGSRMSAEASAR) is disordered. Residues 48 to 90 (GATLFATGKWVGVILDEAKGKNDGTVQGRKYFTCDEGHGIFVR) enclose the CAP-Gly domain. The interval 99–225 (DGADTTSPET…EEEGLRAQVR (127 aa)) is disordered. A compositionally biased stretch (polar residues) spans 102–114 (DTTSPETPDSSAS). Phosphothreonine occurs at positions 108, 145, 146, and 147. Over residues 129–152 (SKLRGPKPKKAPTARKTTTRRPKP) the composition is skewed to basic residues. Residues 161 to 205 (AGASSSLGPSGSASAGELSSSEPSTPAQTPLAAPIIPTPALTSPG) show a composition bias toward low complexity. Phosphoserine occurs at positions 179 and 212. Residues 214–225 (SKEEEGLRAQVR) show a composition bias toward basic and acidic residues. Coiled coils occupy residues 217–540 (EEGL…QQEA) and 952–1043 (IKEL…QSKR). An interaction with HPS6 region spans residues 911–1281 (EYDAERPPSK…LHQLHDRLIS (371 aa)). A disordered region spans residues 1065–1084 (GEEQQRGGAPGQAPGIVPGP).

This sequence belongs to the dynactin 150 kDa subunit family. In terms of assembly, monomer and homodimer. Subunit of dynactin, a multiprotein complex part of a tripartite complex with dynein and a adapter, such as BICDL1, BICD2 or HOOK3. The dynactin complex is built around ACTR1A/ACTB filament and consists of an actin-related filament composed of a shoulder domain, a pointed end and a barbed end. Its length is defined by its flexible shoulder domain. The soulder is composed of 2 DCTN1 subunits, 4 DCTN2 and 2 DCTN3. DCTN1/p150(glued) binds directly to microtubules and to cytoplasmic dynein. The 4 DCNT2 (via N-terminus) bind the ACTR1A filament and act as molecular rulers to determine the length. The pointed end is important for binding dynein-dynactin cargo adapters. Consists of 4 subunits: ACTR10, DCNT4, DCTN5 and DCTN6. The barbed end is composed of a CAPZA1:CAPZB heterodimers, which binds ACTR1A/ACTB filament and dynactin and stabilizes dynactin. Interacts with the C-terminus of MAPRE1, MAPRE2 and MAPRE3. Interacts (via C-terminus) with SNX6. Interacts with CLN3, DYNAP, ECPAS and FBXL5. Interacts with MISP; this interaction regulates its distribution at the cell cortex. Interacts with CEP131. Interacts with CEP126. Interacts with CLIP1. Interacts with dynein intermediate chain and dynein heavy chain. Interacts with PLK1 (via POLO-box domain). Interacts with TBCB. Binds preferentially to tyrosinated microtubules than to detyrosinated microtubules. Interacts with PARD6A. Interacts with HPS6. Interacts with KIF3A. Interacts with BICD2. Interacts with DST (isoform 9). Interacts with DST (isoform 1). Identified in a complex with MREG and RILP. Interacts with BCCIP (isoform 2/alpha). Interacts with DCDC1. Interacts with AKNA. Interacts with DYNC1I2. Interacts with RUFY3 and RUFY4. In terms of processing, ubiquitinated by a SCF complex containing FBXL5, leading to its degradation by the proteasome. Phosphorylation by SLK at Thr-145, Thr-146 and Thr-147 targets DCTN1 to the centrosome. It is uncertain if SLK phosphorylates all three threonines or one or two of them. PLK1-mediated phosphorylation at Ser-179 is essential for its localization in the nuclear envelope, promotes its dissociation from microtubules during early mitosis and positively regulates nuclear envelope breakdown during prophase.

Its subcellular location is the cytoplasm. It is found in the cytoskeleton. The protein resides in the microtubule organizing center. The protein localises to the centrosome. It localises to the centriole. Its subcellular location is the spindle. It is found in the nucleus envelope. The protein resides in the cell cortex. In terms of biological role, part of the dynactin complex that activates the molecular motor dynein for ultra-processive transport along microtubules. Plays a key role in dynein-mediated retrograde transport of vesicles and organelles along microtubules by recruiting and tethering dynein to microtubules. Binds to both dynein and microtubules providing a link between specific cargos, microtubules and dynein. Essential for targeting dynein to microtubule plus ends, recruiting dynein to membranous cargos and enhancing dynein processivity (the ability to move along a microtubule for a long distance without falling off the track). Can also act as a brake to slow the dynein motor during motility along the microtubule. Can regulate microtubule stability by promoting microtubule formation, nucleation and polymerization and by inhibiting microtubule catastrophe in neurons. Inhibits microtubule catastrophe by binding both to microtubules and to tubulin, leading to enhanced microtubule stability along the axon. Plays a role in metaphase spindle orientation. Plays a role in centriole cohesion and subdistal appendage organization and function. Its recruitment to the centriole in a KIF3A-dependent manner is essential for the maintenance of centriole cohesion and the formation of subdistal appendage. Also required for microtubule anchoring at the mother centriole. Plays a role in primary cilia formation. In Sus scrofa (Pig), this protein is Dynactin subunit 1 (DCTN1).